The following is a 576-amino-acid chain: Arginine--tRNA ligase (576 aa).

The 'HIGH' region signature appears at 122–132 (PNVAKQMHVGH).

Belongs to the class-I aminoacyl-tRNA synthetase family. In terms of assembly, monomer.

It localises to the cytoplasm. It carries out the reaction tRNA(Arg) + L-arginine + ATP = L-arginyl-tRNA(Arg) + AMP + diphosphate. The chain is Arginine--tRNA ligase from Proteus mirabilis (strain HI4320).